Consider the following 226-residue polypeptide: uncharacterized protein (226 aa).

It to L.innocua lin2408 and lin2600.

This is an uncharacterized protein from Listeria innocua serovar 6a (strain ATCC BAA-680 / CLIP 11262).